Reading from the N-terminus, the 224-residue chain is UPF0758 protein PLES_57141 (224 aa).

In terms of domain architecture, MPN spans 102 to 224 (ILESPQAVRD…PLSLAEYGWL (123 aa)). Residues His-173, His-175, and Asp-186 each contribute to the Zn(2+) site. The JAMM motif motif lies at 173–186 (HNHPSGDARPSLAD).

The protein belongs to the UPF0758 family.

This Pseudomonas aeruginosa (strain LESB58) protein is UPF0758 protein PLES_57141.